Here is a 465-residue protein sequence, read N- to C-terminus: Putative ABC transporter ATP-binding protein MG065 homolog (465 aa).

An ABC transporter domain is found at 232–465; sequence IELKNVYKYI…PKQVEDINWI (234 aa). Residue 268–275 participates in ATP binding; the sequence is GPSGSGKT.

This sequence belongs to the ABC transporter superfamily.

The sequence is that of Putative ABC transporter ATP-binding protein MG065 homolog from Mycoplasma pneumoniae (strain ATCC 29342 / M129 / Subtype 1) (Mycoplasmoides pneumoniae).